The following is a 701-amino-acid chain: Triadin (701 aa).

Positions 1-28 (MTEITAEGNASTTTTVIDSKNGSVPKSP) are disordered. At 1-47 (MTEITAEGNASTTTTVIDSKNGSVPKSPGKVLKRTVTEDIVTTFSSP) the chain is on the cytoplasmic side. Over residues 8–24 (GNASTTTTVIDSKNGSV) the composition is skewed to polar residues. The chain crosses the membrane as a helical span at residues 48–68 (AAWLLVIALIITWSAVAVVMF). Topologically, residues 69–701 (DLVDYKNFSA…SSPGQKQQGQ (633 aa)) are lumenal. N75 carries an N-linked (GlcNAc...) asparagine glycan. The span at 117–130 (DGDEDDDDGDEDTD) shows a compositional bias: acidic residues. 3 disordered regions span residues 117–256 (DGDE…KHEQ), 273–654 (GDLR…TKRQ), and 676–701 (FPVT…QQGQ). Basic and acidic residues-rich tracts occupy residues 131 to 256 (KGEI…KHEQ), 303 to 351 (EGKE…KAPE), 365 to 385 (AKKD…EEHP), 391 to 426 (EKKE…KEET), 437 to 485 (GKKE…EVKP), and 492 to 643 (VKKE…KAKE). N617 is a glycosylation site (N-linked (GlcNAc...) asparagine). Low complexity predominate over residues 684 to 701 (PGESSGQPSSPGQKQQGQ).

In terms of assembly, homooligomer of variable subunit number; disulfide-linked. Interacts with CASQ1 and RYR1 in skeletal muscle. Interacts with CASQ2. In terms of processing, phosphorylated by CaMK2. N-glycosylated. Detected in heart (at protein level). Skeletal and cardiac muscle.

It localises to the sarcoplasmic reticulum membrane. Functionally, contributes to the regulation of lumenal Ca2+ release via the sarcoplasmic reticulum calcium release channels RYR1 and RYR2, a key step in triggering skeletal and heart muscle contraction. Required for normal organization of the triad junction, where T-tubules and the sarcoplasmic reticulum terminal cisternae are in close contact. Required for normal skeletal muscle strength. Plays a role in excitation-contraction coupling in the heart and in regulating the rate of heart beats. In Canis lupus familiaris (Dog), this protein is Triadin (TRDN).